A 407-amino-acid chain; its full sequence is uncharacterized protein (407 aa).

The disordered stretch occupies residues E145–T231. Over residues S158–S175 the composition is skewed to basic residues. Residues S176 to K196 are compositionally biased toward low complexity. Residues I271–I407 form the N-acetyltransferase domain.

It localises to the virion. This is an uncharacterized protein from Acanthamoeba polyphaga (Amoeba).